A 289-amino-acid polypeptide reads, in one-letter code: NAD kinase (289 aa).

Catalysis depends on aspartate 82, which acts as the Proton acceptor. NAD(+) is bound by residues 82–83 (DG), arginine 87, 150–151 (NE), lysine 161, arginine 178, aspartate 180, 191–196 (TAYAMS), alanine 215, and glutamine 250.

The protein belongs to the NAD kinase family. The cofactor is a divalent metal cation.

It localises to the cytoplasm. It carries out the reaction NAD(+) + ATP = ADP + NADP(+) + H(+). Functionally, involved in the regulation of the intracellular balance of NAD and NADP, and is a key enzyme in the biosynthesis of NADP. Catalyzes specifically the phosphorylation on 2'-hydroxyl of the adenosine moiety of NAD to yield NADP. In Methanosarcina mazei (strain ATCC BAA-159 / DSM 3647 / Goe1 / Go1 / JCM 11833 / OCM 88) (Methanosarcina frisia), this protein is NAD kinase.